A 637-amino-acid polypeptide reads, in one-letter code: Sphingomyelin phosphodiesterase B (637 aa).

The signal sequence occupies residues 1 to 20; the sequence is MKVKAPILLLFVFLINFCFS. Residue asparagine 73 is glycosylated (N-linked (GlcNAc...) asparagine). The region spanning 73 to 155 is the Saposin B-type domain; the sequence is NGTKCDICKF…GFVGFCPYVP (83 aa). 3 cysteine pairs are disulfide-bonded: cysteine 77/cysteine 151, cysteine 80/cysteine 145, and cysteine 108/cysteine 119. N-linked (GlcNAc...) asparagine glycosylation is found at asparagine 128 and asparagine 157. Aspartate 191 and histidine 193 together coordinate Zn(2+). Cysteine 212 and cysteine 233 are disulfide-bonded. Aspartate 263 is a Zn(2+) binding site. Asparagine 279 is a glycosylation site (N-linked (GlcNAc...) asparagine). Position 304 (asparagine 304) interacts with Zn(2+). Asparagine 377 carries N-linked (GlcNAc...) asparagine glycosylation. Zn(2+) is bound by residues histidine 407, histidine 441, and histidine 443. Asparagine 523 and asparagine 546 each carry an N-linked (GlcNAc...) asparagine glycan. A disulfide bridge connects residues cysteine 582 and cysteine 595. A glycan (N-linked (GlcNAc...) asparagine) is linked at asparagine 606.

Belongs to the acid sphingomyelinase family. The cofactor is Zn(2+).

It localises to the secreted. Converts sphingomyelin to ceramide. The sequence is that of Sphingomyelin phosphodiesterase B (sgmB) from Dictyostelium discoideum (Social amoeba).